A 422-amino-acid polypeptide reads, in one-letter code: Methylaspartate ammonia-lyase (422 aa).

(2S,3S)-3-methyl-L-aspartate is bound at residue Gln-175. 3 residues coordinate Mg(2+): Asp-239, Glu-276, and Asp-310. Gln-332 provides a ligand contact to (2S,3S)-3-methyl-L-aspartate. The active-site Proton acceptor is Lys-334. 363-364 is a (2S,3S)-3-methyl-L-aspartate binding site; that stretch reads TC.

The protein belongs to the methylaspartate ammonia-lyase family. Homodimer. Requires Mg(2+) as cofactor.

It carries out the reaction (2S,3S)-3-methyl-L-aspartate = mesaconate + NH4(+). Its pathway is amino-acid degradation; L-glutamate degradation via mesaconate pathway; acetate and pyruvate from L-glutamate: step 2/4. In terms of biological role, involved in the methylaspartate cycle. Catalyzes the formation of the alpha,beta-unsaturated bond by the reversible anti elimination of ammonia from L-threo-beta-methylaspartate (L-threo-(2S,3S)-3-methylaspartate) to give mesaconate. The protein is Methylaspartate ammonia-lyase (mal) of Haloarcula marismortui (strain ATCC 43049 / DSM 3752 / JCM 8966 / VKM B-1809) (Halobacterium marismortui).